We begin with the raw amino-acid sequence, 371 residues long: MKLDHLVLKNYRNYAAVDTTFSPEINVLIGANAQGKTNLLESIYVLALARSHRTNNDKELIRFGSEFARVSGQVSRQSGSHQLELIISHQGKRARIDRIEQPKLSQYLGHFNVILFAPEDLAIVKGSPAGRRRFIDMEFGQMSPKYLYNLSQYKTFLKQRNAYLKQLKYHQAKDLVYLDVLTDSLAAFGAELITARAKLLETMSDYAATIQQDITKGRESLHFSYQTQVDPSLRGNSEQVYTALGEMFAKQQAREIEQGTSLVGPQRDDVLFIVNDKDVANFGSQGQQRTTALAVKLAEIDLMKDQTGEYPVLLLDDVLSELDAARQTHLLKAIQTKVQTFLTTTSLEGIQKEIIATPAVFKVDEGTLARA.

30–37 (GANAQGKT) is an ATP binding site.

This sequence belongs to the RecF family.

It is found in the cytoplasm. In terms of biological role, the RecF protein is involved in DNA metabolism; it is required for DNA replication and normal SOS inducibility. RecF binds preferentially to single-stranded, linear DNA. It also seems to bind ATP. This Lacticaseibacillus paracasei (strain ATCC 334 / BCRC 17002 / CCUG 31169 / CIP 107868 / KCTC 3260 / NRRL B-441) (Lactobacillus paracasei) protein is DNA replication and repair protein RecF.